Reading from the N-terminus, the 251-residue chain is 5'-nucleotidase SurE (251 aa).

Asp9, Asp10, Ser40, and Asn94 together coordinate a divalent metal cation.

Belongs to the SurE nucleotidase family. Requires a divalent metal cation as cofactor.

Its subcellular location is the cytoplasm. It catalyses the reaction a ribonucleoside 5'-phosphate + H2O = a ribonucleoside + phosphate. Nucleotidase that shows phosphatase activity on nucleoside 5'-monophosphates. The protein is 5'-nucleotidase SurE of Aquifex aeolicus (strain VF5).